The primary structure comprises 465 residues: 6-phospho-beta-glucosidase GmuD (465 aa).

The active-site Proton donor is Glu-170. The Nucleophile role is filled by Glu-368.

The protein belongs to the glycosyl hydrolase 1 family.

It catalyses the reaction 6-phospho-beta-D-glucosyl-(1-&gt;4)-D-glucose + H2O = D-glucose 6-phosphate + D-glucose. Functionally, phospho-beta-D-glucosidase that seems to be involved in the degradation of glucomannan. Is also capable of hydrolyzing aryl-phospho-beta-D-glucosides, although very weakly, and plays only a minor role, if any, in the degradation of these substrates in vivo. This is 6-phospho-beta-glucosidase GmuD (gmuD) from Bacillus subtilis (strain 168).